A 485-amino-acid polypeptide reads, in one-letter code: Glutamyl-tRNA(Gln) amidotransferase subunit A (485 aa).

Residues Lys79 and Ser154 each act as charge relay system in the active site. Ser178 functions as the Acyl-ester intermediate in the catalytic mechanism.

This sequence belongs to the amidase family. GatA subfamily. Heterotrimer of A, B and C subunits.

It carries out the reaction L-glutamyl-tRNA(Gln) + L-glutamine + ATP + H2O = L-glutaminyl-tRNA(Gln) + L-glutamate + ADP + phosphate + H(+). Its function is as follows. Allows the formation of correctly charged Gln-tRNA(Gln) through the transamidation of misacylated Glu-tRNA(Gln) in organisms which lack glutaminyl-tRNA synthetase. The reaction takes place in the presence of glutamine and ATP through an activated gamma-phospho-Glu-tRNA(Gln). In Clostridium botulinum (strain ATCC 19397 / Type A), this protein is Glutamyl-tRNA(Gln) amidotransferase subunit A.